We begin with the raw amino-acid sequence, 38 residues long: Small ribosomal subunit protein eS32 (38 aa).

Belongs to the eukaryotic ribosomal protein eS32 family. As to quaternary structure, component of the small ribosomal subunit (SSU).

This is Small ribosomal subunit protein eS32 (rpl41e) from Methanocaldococcus jannaschii (strain ATCC 43067 / DSM 2661 / JAL-1 / JCM 10045 / NBRC 100440) (Methanococcus jannaschii).